A 401-amino-acid chain; its full sequence is Ribosomal protein uS12 methylthiotransferase RimO (401 aa).

Positions 1 to 108 (MKINFINLGC…GIELLQTPKR (108 aa)) constitute an MTTase N-terminal domain. 6 residues coordinate [4Fe-4S] cluster: C10, C43, C72, C124, C128, and C131. Positions 110-339 (LTTKHYAYLK…FNLSQEILEE (230 aa)) constitute a Radical SAM core domain.

Belongs to the methylthiotransferase family. RimO subfamily. Requires [4Fe-4S] cluster as cofactor.

The protein resides in the cytoplasm. The catalysed reaction is L-aspartate(89)-[ribosomal protein uS12]-hydrogen + (sulfur carrier)-SH + AH2 + 2 S-adenosyl-L-methionine = 3-methylsulfanyl-L-aspartate(89)-[ribosomal protein uS12]-hydrogen + (sulfur carrier)-H + 5'-deoxyadenosine + L-methionine + A + S-adenosyl-L-homocysteine + 2 H(+). In terms of biological role, catalyzes the methylthiolation of an aspartic acid residue of ribosomal protein uS12. The polypeptide is Ribosomal protein uS12 methylthiotransferase RimO (Hydrogenobaculum sp. (strain Y04AAS1)).